Here is a 212-residue protein sequence, read N- to C-terminus: Glycerol-3-phosphate acyltransferase (212 aa).

Transmembrane regions (helical) follow at residues 9–29 (AACL…GYLL), 67–87 (GPAL…VLLA), 95–115 (WLQV…VWLG), 128–148 (MFLG…MAVI), and 168–190 (LMVV…LMVL).

It belongs to the PlsY family. In terms of assembly, probably interacts with PlsX.

It is found in the cell inner membrane. The catalysed reaction is an acyl phosphate + sn-glycerol 3-phosphate = a 1-acyl-sn-glycero-3-phosphate + phosphate. Its pathway is lipid metabolism; phospholipid metabolism. Functionally, catalyzes the transfer of an acyl group from acyl-phosphate (acyl-PO(4)) to glycerol-3-phosphate (G3P) to form lysophosphatidic acid (LPA). This enzyme utilizes acyl-phosphate as fatty acyl donor, but not acyl-CoA or acyl-ACP. The polypeptide is Glycerol-3-phosphate acyltransferase (Parasynechococcus marenigrum (strain WH8102)).